We begin with the raw amino-acid sequence, 264 residues long: MRAYLDLVQHVLEHGHRKEDRTGTGTLSVFGHQMRFDLEAGFPLVTTKRVFWRGVAEELLWFIRGSTNARELEDKGVRIWSPWADPDGELGPVYGAQWRSWRAADGREIDQLQQVLTELRQRPDSRRHLVSAWNVGELERMNLPPCHLLFQFYVAEGRLSCQLYQRSADLFLGVPFNIASYSLLTHLVARHVGLEVGEFIWTGGDCHLYLNHLAQAREQLSRAPRPLPTLHIDPGVTDLFAVRYEHLRLAGYDPHPKLTAPVAV.

DUMP-binding positions include arginine 21 and 126–127 (RR). The Nucleophile role is filled by cysteine 146. DUMP contacts are provided by residues 166 to 169 (RSAD), asparagine 177, and 207 to 209 (HLY). Residue aspartate 169 participates in (6R)-5,10-methylene-5,6,7,8-tetrahydrofolate binding. Position 263 (alanine 263) interacts with (6R)-5,10-methylene-5,6,7,8-tetrahydrofolate.

It belongs to the thymidylate synthase family. Bacterial-type ThyA subfamily. As to quaternary structure, homodimer.

The protein localises to the cytoplasm. The enzyme catalyses dUMP + (6R)-5,10-methylene-5,6,7,8-tetrahydrofolate = 7,8-dihydrofolate + dTMP. It participates in pyrimidine metabolism; dTTP biosynthesis. In terms of biological role, catalyzes the reductive methylation of 2'-deoxyuridine-5'-monophosphate (dUMP) to 2'-deoxythymidine-5'-monophosphate (dTMP) while utilizing 5,10-methylenetetrahydrofolate (mTHF) as the methyl donor and reductant in the reaction, yielding dihydrofolate (DHF) as a by-product. This enzymatic reaction provides an intracellular de novo source of dTMP, an essential precursor for DNA biosynthesis. The chain is Thymidylate synthase from Halorhodospira halophila (strain DSM 244 / SL1) (Ectothiorhodospira halophila (strain DSM 244 / SL1)).